Reading from the N-terminus, the 298-residue chain is Rhodomycin D methylesterase DauP (298 aa).

The region spanning 25-277 (PLLLIAGGNL…VEIENMGHAL (253 aa)) is the AB hydrolase-1 domain.

It belongs to the methyl esterase DnrP family.

The catalysed reaction is rhodomycin D + H2O = 10-carboxy-13-deoxycarminomycin + methanol + H(+). It catalyses the reaction 4-O-methylrhodomycin D + H2O = 10-carboxy-13-deoxydaunorubicin + methanol + H(+). Its pathway is antibiotic biosynthesis; daunorubicin biosynthesis. The protein operates within antibiotic biosynthesis; carminomycin biosynthesis. Its function is as follows. Involved in the biosynthesis of the anthracyclines carminomycin and daunorubicin (daunomycin) which are aromatic polyketide antibiotics that exhibit high cytotoxicity and are widely applied in the chemotherapy of a variety of cancers. Catalyzes the removal of methyl group from the carbomethoxy group of rhodomycin D (10-carbomethoxy-13-deoxycarminomycin) and 4-O-methylrhodomycin D to yield 10-carboxy-13-deoxycarminomycin and 10-carboxy-13-deoxydaunorubicin, respectively. Could be also involved in the decarboxylation of 10-carboxy-13-deoxycarminomycin and 10-carboxy-13-deoxydaunorubicin to yield 13-deoxycarminomycin and 13-deoxydaunorubicin, respectively. It seems that DauK may influence the ability of DauP to carry out the decarboxylation. The chain is Rhodomycin D methylesterase DauP (dauP) from Streptomyces sp. (strain C5).